Reading from the N-terminus, the 430-residue chain is Serine hydroxymethyltransferase 2 (430 aa).

(6S)-5,6,7,8-tetrahydrofolate-binding positions include Leu-128 and Gly-132–Leu-134. N6-(pyridoxal phosphate)lysine is present on Lys-237.

Belongs to the SHMT family. As to quaternary structure, homodimer. The cofactor is pyridoxal 5'-phosphate.

It localises to the cytoplasm. It carries out the reaction (6R)-5,10-methylene-5,6,7,8-tetrahydrofolate + glycine + H2O = (6S)-5,6,7,8-tetrahydrofolate + L-serine. Its pathway is one-carbon metabolism; tetrahydrofolate interconversion. It functions in the pathway amino-acid biosynthesis; glycine biosynthesis; glycine from L-serine: step 1/1. Catalyzes the reversible interconversion of serine and glycine with tetrahydrofolate (THF) serving as the one-carbon carrier. This reaction serves as the major source of one-carbon groups required for the biosynthesis of purines, thymidylate, methionine, and other important biomolecules. Also exhibits THF-independent aldolase activity toward beta-hydroxyamino acids, producing glycine and aldehydes, via a retro-aldol mechanism. The protein is Serine hydroxymethyltransferase 2 of Rhodospirillum rubrum (strain ATCC 11170 / ATH 1.1.1 / DSM 467 / LMG 4362 / NCIMB 8255 / S1).